The following is a 314-amino-acid chain: L-lactate dehydrogenase 2 (314 aa).

NAD(+) is bound by residues valine 16, aspartate 37, lysine 42, tyrosine 68, and glycine 82–leucine 83. Residues glutamine 85, arginine 91, and asparagine 123–aspartate 126 each bind substrate. NAD(+) contacts are provided by residues alanine 121 to asparagine 123 and serine 146. Aspartate 151–arginine 154 contacts substrate. Beta-D-fructose 1,6-bisphosphate contacts are provided by arginine 156 and histidine 171. Histidine 178 acts as the Proton acceptor in catalysis. Residue tyrosine 223 is modified to Phosphotyrosine. Residue threonine 232 participates in substrate binding.

This sequence belongs to the LDH/MDH superfamily. LDH family. As to quaternary structure, homotetramer.

The protein localises to the cytoplasm. It catalyses the reaction (S)-lactate + NAD(+) = pyruvate + NADH + H(+). Its pathway is fermentation; pyruvate fermentation to lactate; (S)-lactate from pyruvate: step 1/1. With respect to regulation, allosterically activated by fructose 1,6-bisphosphate (FBP). In terms of biological role, catalyzes the conversion of lactate to pyruvate. This Bacillus cereus (strain ATCC 14579 / DSM 31 / CCUG 7414 / JCM 2152 / NBRC 15305 / NCIMB 9373 / NCTC 2599 / NRRL B-3711) protein is L-lactate dehydrogenase 2.